A 496-amino-acid chain; its full sequence is L-arabinose isomerase (496 aa).

Residues glutamate 302, glutamate 329, histidine 346, and histidine 445 each coordinate Mn(2+).

Belongs to the arabinose isomerase family. Requires Mn(2+) as cofactor.

It carries out the reaction beta-L-arabinopyranose = L-ribulose. The protein operates within carbohydrate degradation; L-arabinose degradation via L-ribulose; D-xylulose 5-phosphate from L-arabinose (bacterial route): step 1/3. Functionally, catalyzes the conversion of L-arabinose to L-ribulose. In Thermotoga maritima (strain ATCC 43589 / DSM 3109 / JCM 10099 / NBRC 100826 / MSB8), this protein is L-arabinose isomerase.